A 142-amino-acid chain; its full sequence is Baculoviral IAP repeat-containing protein 5 (142 aa).

The stretch at 18–88 (RISTFKNWPF…KHSSGCAFLS (71 aa)) is one BIR repeat. Position 20 is a phosphoserine; by AURKC (Ser-20). An N6-acetyllysine modification is found at Lys-23. Thr-34 carries the post-translational modification Phosphothreonine; by CDK1 and CDK15. Thr-48 carries the post-translational modification Phosphothreonine. The Zn(2+) site is built by Cys-57, Cys-60, His-77, and Cys-84. N6-acetyllysine occurs at positions 90, 110, 112, and 115. Thr-117 bears the Phosphothreonine; by AURKB mark. Lys-129 is subject to N6-acetyllysine.

The protein belongs to the IAP family. As to quaternary structure, monomer or homodimer. Exists as a homodimer in the apo state and as a monomer in the CPC-bound state. The monomer protects cells against apoptosis more efficiently than the dimer. Only the dimeric form is capable of enhancing tubulin stability in cells. When phosphorylated, interacts with LAMTOR5/HBXIP; the resulting complex binds pro-CASP9, as well as active CASP9, but much less efficiently. Component of the chromosomal passenger complex (CPC) composed of at least BIRC5/survivin, CDCA8/borealin, INCENP, AURKB or AURKC; in the complex forms a triple-helix bundle-based subcomplex with INCENP and CDCA8. Interacts with JTB. Interacts (via BIR domain) with histone H3 phosphorylated at 'Thr-3' (H3pT3). Interacts with EVI5. Interacts with GTP-bound RAN in both the S and M phases of the cell cycle. Interacts with USP9X. Interacts with tubulin. Interacts with BIRC2/c-IAP1. The acetylated form at Lys-129 interacts with STAT3. The monomeric form deacetylated at Lys-129 interacts with XPO1/CRM1. The monomeric form interacts with XIAP/BIRC4. Both the dimeric and monomeric form can interact with DIABLO/SMAC. Interacts with BIRC6/bruce. Interacts with FBXL7; this interaction facilitates the polyubiquitination and subsequent proteasomal degradation of BIRC5 by the SCF(FBXL7) E3 ubiquitin-protein ligase complex. In terms of processing, ubiquitinated by the Cul9-RING ubiquitin-protein ligase complex, leading to its degradation. Ubiquitination is required for centrosomal targeting. Deubiquitinated by USP35 or USP38; leading to stabilization. Post-translationally, acetylation at Lys-129 results in its homodimerization, while deacetylation promotes the formation of monomers which heterodimerize with XPO1/CRM1 which facilitates its nuclear export. The acetylated form represses STAT3 transactivation. The dynamic equilibrium between its acetylation and deacetylation at Lys-129 determines its interaction with XPO1/CRM1, its subsequent subcellular localization, and its ability to inhibit STAT3 transactivation. In vitro phosphorylation at Thr-117 by AURKB prevents interaction with INCENP and localization to mitotic chromosomes. Phosphorylation at Thr-48 by CK2 is critical for its mitotic and anti-apoptotic activities. Phosphorylation at Thr-34 by CDK15 is critical for its anti-apoptotic activity. Phosphorylation at Ser-20 by AURKC is critical for regulation of proper chromosome alignment and segregation, and possibly cytokinesis.

The protein resides in the cytoplasm. The protein localises to the nucleus. It localises to the chromosome. Its subcellular location is the centromere. It is found in the cytoskeleton. The protein resides in the spindle. The protein localises to the kinetochore. It localises to the midbody. Functionally, multitasking protein that has dual roles in promoting cell proliferation and preventing apoptosis. Component of a chromosome passage protein complex (CPC) which is essential for chromosome alignment and segregation during mitosis and cytokinesis. Acts as an important regulator of the localization of this complex; directs CPC movement to different locations from the inner centromere during prometaphase to midbody during cytokinesis and participates in the organization of the center spindle by associating with polymerized microtubules. Involved in the recruitment of CPC to centromeres during early mitosis via association with histone H3 phosphorylated at 'Thr-3' (H3pT3) during mitosis. The complex with RAN plays a role in mitotic spindle formation by serving as a physical scaffold to help deliver the RAN effector molecule TPX2 to microtubules. May counteract a default induction of apoptosis in G2/M phase. The acetylated form represses STAT3 transactivation of target gene promoters. May play a role in neoplasia. Inhibitor of CASP3 and CASP7. Essential for the maintenance of mitochondrial integrity and function. This is Baculoviral IAP repeat-containing protein 5 (BIRC5) from Felis catus (Cat).